A 380-amino-acid polypeptide reads, in one-letter code: Succinate--CoA ligase [ADP-forming] subunit beta 2 (380 aa).

In terms of domain architecture, ATP-grasp spans 9-235 (KQIFSKHGIR…YTEADQMERI (227 aa)). Residues lysine 45, 52–54 (GRG), glutamate 91, isoleucine 94, and glutamate 99 contribute to the ATP site. Asparagine 191 and aspartate 204 together coordinate Mg(2+). Substrate-binding positions include asparagine 255 and 312–314 (GIT).

The protein belongs to the succinate/malate CoA ligase beta subunit family. In terms of assembly, heterotetramer of two alpha and two beta subunits. Mg(2+) is required as a cofactor.

It carries out the reaction succinate + ATP + CoA = succinyl-CoA + ADP + phosphate. The catalysed reaction is GTP + succinate + CoA = succinyl-CoA + GDP + phosphate. The protein operates within carbohydrate metabolism; tricarboxylic acid cycle; succinate from succinyl-CoA (ligase route): step 1/1. Succinyl-CoA synthetase functions in the citric acid cycle (TCA), coupling the hydrolysis of succinyl-CoA to the synthesis of either ATP or GTP and thus represents the only step of substrate-level phosphorylation in the TCA. The beta subunit provides nucleotide specificity of the enzyme and binds the substrate succinate, while the binding sites for coenzyme A and phosphate are found in the alpha subunit. This chain is Succinate--CoA ligase [ADP-forming] subunit beta 2, found in Archaeoglobus fulgidus (strain ATCC 49558 / DSM 4304 / JCM 9628 / NBRC 100126 / VC-16).